Here is a 204-residue protein sequence, read N- to C-terminus: UPF0637 protein SAR1080 (204 aa).

The protein belongs to the UPF0637 family.

This is UPF0637 protein SAR1080 from Staphylococcus aureus (strain MRSA252).